The primary structure comprises 30 residues: Cycloviolacin-H4 (30 aa).

The segment at residues 1-30 (GIPCAESCVWIPCTVTALLGCSCSNNVCYN) is a cross-link (cyclopeptide (Gly-Asn)). Disulfide bonds link Cys4-Cys21, Cys8-Cys23, and Cys13-Cys28.

Post-translationally, this is a cyclic peptide.

Functionally, probably participates in a plant defense mechanism. Has potent hemolytic activity. The polypeptide is Cycloviolacin-H4 (Viola hederacea (Australian violet)).